We begin with the raw amino-acid sequence, 430 residues long: Asparagine--tRNA ligase (430 aa).

This sequence belongs to the class-II aminoacyl-tRNA synthetase family.

The protein localises to the cytoplasm. The catalysed reaction is tRNA(Asn) + L-asparagine + ATP = L-asparaginyl-tRNA(Asn) + AMP + diphosphate + H(+). The polypeptide is Asparagine--tRNA ligase (Thermococcus gammatolerans (strain DSM 15229 / JCM 11827 / EJ3)).